The following is a 381-amino-acid chain: G-protein coupled receptor homolog Q2/3L (381 aa).

The Extracellular segment spans residues 1–91; sequence MNYTLSTVSS…HCDDGVDTTS (91 aa). Residues N2, N15, N19, N41, N50, N56, and N62 are each glycosylated (N-linked (GlcNAc...) asparagine; by host). A helical transmembrane segment spans residues 92 to 112; the sequence is FGLITLYSTIFFLGLFGNIIV. Topologically, residues 113-126 are cytoplasmic; the sequence is LTVLRKYKIKTIQD. The chain crosses the membrane as a helical span at residues 127-147; the sequence is MFLLNLTLSDLIFVLVFPFNL. Over 148–165 the chain is Extracellular; it reads YDSIAKQWSLGDCLCKFK. The chain crosses the membrane as a helical span at residues 166–186; it reads AMFYFVGFYNSMSFITLMSID. Residues 187-206 lie on the Cytoplasmic side of the membrane; the sequence is RYLAVVHPVKSMPIRTKRYG. A helical transmembrane segment spans residues 207-227; that stretch reads IVLSMVVWIVSTIESFPIMLF. At 228-251 the chain is on the extracellular side; that stretch reads YETKKVYGITYCHVFYNDNAKIWK. A helical membrane pass occupies residues 252–272; that stretch reads LFINFEINIFGMIIPLTILLY. Over 273 to 294 the chain is Cytoplasmic; the sequence is CYYKILNTLKTSQTKNKKAIKM. Residues 295–315 form a helical membrane-spanning segment; sequence VFLIVICSVLFLLPFSVTVFV. The Extracellular segment spans residues 316–336; that stretch reads SSLYLLNVFSGCMALRFVNLA. Residues 337-357 traverse the membrane as a helical segment; that stretch reads VHVAEIVSLCHCFINPLIYAF. Residues 358–381 are Cytoplasmic-facing; the sequence is CSREFTKKLLRLRTTSSAGSISIG.

It belongs to the G-protein coupled receptor 1 family.

It is found in the host cell membrane. Putative chemokine receptor. The sequence is that of G-protein coupled receptor homolog Q2/3L from Ovis aries (Sheep).